The primary structure comprises 67 residues: Large ribosomal subunit protein bL35 (67 aa).

Residues 1 to 16 (MPKMKTKKSAAKRFRV) are compositionally biased toward basic residues. A disordered region spans residues 1–22 (MPKMKTKKSAAKRFRVRPGGTV).

Belongs to the bacterial ribosomal protein bL35 family.

The protein is Large ribosomal subunit protein bL35 of Methylibium petroleiphilum (strain ATCC BAA-1232 / LMG 22953 / PM1).